Here is a 696-residue protein sequence, read N- to C-terminus: UV radiation resistance-associated gene protein (696 aa).

Phosphoserine is present on residues S214 and S218. Coiled-coil stretches lie at residues L251–L278 and N330–L394. Phosphoserine is present on S666. The segment at S666–S696 is disordered. At Y667 the chain carries Phosphotyrosine. 2 positions are modified to phosphoserine: S668 and S685. Positions N681–S696 are enriched in polar residues.

Functionally, involved in biosynthetic vesicle transport to lysosomes. Acts as a cell growth regulator. Also has a crucial role in controlling organ rotation by regulating membrane-localized Notch receptor endocytosis and subsequent degradation. Regulation of organ rotation is not by induction of autophagy. The polypeptide is UV radiation resistance-associated gene protein (Uvrag) (Drosophila melanogaster (Fruit fly)).